A 357-amino-acid chain; its full sequence is Phosphoribosylformylglycinamidine cyclo-ligase (357 aa).

It belongs to the AIR synthase family.

It localises to the cytoplasm. The catalysed reaction is 2-formamido-N(1)-(5-O-phospho-beta-D-ribosyl)acetamidine + ATP = 5-amino-1-(5-phospho-beta-D-ribosyl)imidazole + ADP + phosphate + H(+). It participates in purine metabolism; IMP biosynthesis via de novo pathway; 5-amino-1-(5-phospho-D-ribosyl)imidazole from N(2)-formyl-N(1)-(5-phospho-D-ribosyl)glycinamide: step 2/2. The chain is Phosphoribosylformylglycinamidine cyclo-ligase from Rhizobium leguminosarum bv. trifolii (strain WSM2304).